Here is a 408-residue protein sequence, read N- to C-terminus: Sex comb on midleg-like protein 4 (408 aa).

Phosphoserine is present on residues serine 55 and serine 65. Positions alanine 274 to serine 338 are disordered. Positions alanine 278 to asparagine 287 are enriched in polar residues. The segment covering proline 288 to proline 306 has biased composition (low complexity). Positions tryptophan 340 to alanine 406 constitute an SAM domain.

The protein belongs to the SCM family.

It is found in the nucleus. Its function is as follows. Putative Polycomb group (PcG) protein. PcG proteins act by forming multiprotein complexes, which are required to maintain the transcriptionally repressive state of homeotic genes throughout development. The polypeptide is Sex comb on midleg-like protein 4 (Scml4) (Mus musculus (Mouse)).